The chain runs to 363 residues: Ribosomal RNA large subunit methyltransferase M (363 aa).

Residues Ser-187, 220 to 223 (CPGG), Asp-239, Asp-259, and Asp-276 contribute to the S-adenosyl-L-methionine site. Lys-305 (proton acceptor) is an active-site residue.

The protein belongs to the class I-like SAM-binding methyltransferase superfamily. RNA methyltransferase RlmE family. RlmM subfamily. In terms of assembly, monomer.

Its subcellular location is the cytoplasm. It catalyses the reaction cytidine(2498) in 23S rRNA + S-adenosyl-L-methionine = 2'-O-methylcytidine(2498) in 23S rRNA + S-adenosyl-L-homocysteine + H(+). Functionally, catalyzes the 2'-O-methylation at nucleotide C2498 in 23S rRNA. The sequence is that of Ribosomal RNA large subunit methyltransferase M from Shewanella loihica (strain ATCC BAA-1088 / PV-4).